The sequence spans 420 residues: tRNA(Ile)-lysidine synthase, chloroplastic (420 aa).

63–68 (SGGQDS) contacts ATP.

This sequence belongs to the tRNA(Ile)-lysidine synthase family.

Its subcellular location is the plastid. The protein resides in the chloroplast. It catalyses the reaction cytidine(34) in tRNA(Ile2) + L-lysine + ATP = lysidine(34) in tRNA(Ile2) + AMP + diphosphate + H(+). Functionally, ligates lysine onto the cytidine present at position 34 of the AUA codon-specific tRNA(Ile) that contains the anticodon CAU, in an ATP-dependent manner. Cytidine is converted to lysidine, thus changing the amino acid specificity of the tRNA from methionine to isoleucine. The protein is tRNA(Ile)-lysidine synthase, chloroplastic of Zygnema circumcarinatum (Green alga).